A 213-amino-acid chain; its full sequence is Methylthioribulose-1-phosphate dehydratase (213 aa).

Residues histidine 97 and histidine 99 each coordinate Zn(2+).

It belongs to the aldolase class II family. MtnB subfamily. As to quaternary structure, homotetramer. Zn(2+) is required as a cofactor.

The enzyme catalyses 5-(methylsulfanyl)-D-ribulose 1-phosphate = 5-methylsulfanyl-2,3-dioxopentyl phosphate + H2O. It participates in amino-acid biosynthesis; L-methionine biosynthesis via salvage pathway; L-methionine from S-methyl-5-thio-alpha-D-ribose 1-phosphate: step 2/6. Functionally, catalyzes the dehydration of methylthioribulose-1-phosphate (MTRu-1-P) into 2,3-diketo-5-methylthiopentyl-1-phosphate (DK-MTP-1-P). The polypeptide is Methylthioribulose-1-phosphate dehydratase (Geobacillus sp. (strain WCH70)).